The following is a 278-amino-acid chain: Large ribosomal subunit protein uL2 (278 aa).

Residues 222–264 (RGVAMNPVDHPHGGGEGRTSGGRNPVTPWGVPTKGKKTRSNKR) are disordered.

The protein belongs to the universal ribosomal protein uL2 family. In terms of assembly, part of the 50S ribosomal subunit. Forms a bridge to the 30S subunit in the 70S ribosome.

Its function is as follows. One of the primary rRNA binding proteins. Required for association of the 30S and 50S subunits to form the 70S ribosome, for tRNA binding and peptide bond formation. It has been suggested to have peptidyltransferase activity; this is somewhat controversial. Makes several contacts with the 16S rRNA in the 70S ribosome. The chain is Large ribosomal subunit protein uL2 from Methylobacterium radiotolerans (strain ATCC 27329 / DSM 1819 / JCM 2831 / NBRC 15690 / NCIMB 10815 / 0-1).